Reading from the N-terminus, the 522-residue chain is Apolipoprotein N-acyltransferase (522 aa).

The next 6 helical transmembrane spans lie at 17-37 (YFTY…FSPF), 61-81 (TALL…VSWL), 98-118 (FLVG…TYLV), 127-147 (VIFA…FTGF), 164-184 (IAPI…SAVI), and 197-217 (LKLV…SAYS). In terms of domain architecture, CN hydrolase spans 236–483 (AQGNIEQNLK…ETTLTYKIAP (248 aa)). The Proton acceptor role is filled by Glu-276. Residue Lys-342 is part of the active site. Cys-394 acts as the Nucleophile in catalysis. A helical transmembrane segment spans residues 495–515 (NMPLYALSLLFLLLHSMMAFI).

This sequence belongs to the CN hydrolase family. Apolipoprotein N-acyltransferase subfamily.

It localises to the cell inner membrane. The enzyme catalyses N-terminal S-1,2-diacyl-sn-glyceryl-L-cysteinyl-[lipoprotein] + a glycerophospholipid = N-acyl-S-1,2-diacyl-sn-glyceryl-L-cysteinyl-[lipoprotein] + a 2-acyl-sn-glycero-3-phospholipid + H(+). It functions in the pathway protein modification; lipoprotein biosynthesis (N-acyl transfer). Functionally, catalyzes the phospholipid dependent N-acylation of the N-terminal cysteine of apolipoprotein, the last step in lipoprotein maturation. The polypeptide is Apolipoprotein N-acyltransferase (Haemophilus influenzae (strain ATCC 51907 / DSM 11121 / KW20 / Rd)).